The following is a 243-amino-acid chain: Uridylate kinase (243 aa).

15–18 (KLSG) is an ATP binding site. The tract at residues 23–28 (GSEGFG) is involved in allosteric activation by GTP. Residue glycine 57 participates in UMP binding. ATP contacts are provided by glycine 58 and arginine 62. UMP-binding positions include aspartate 77 and 138–145 (TGNPFFTT). 3 residues coordinate ATP: threonine 165, tyrosine 171, and aspartate 174.

The protein belongs to the UMP kinase family. Homohexamer.

The protein resides in the cytoplasm. It carries out the reaction UMP + ATP = UDP + ADP. Its pathway is pyrimidine metabolism; CTP biosynthesis via de novo pathway; UDP from UMP (UMPK route): step 1/1. Its activity is regulated as follows. Allosterically activated by GTP. Inhibited by UTP. In terms of biological role, catalyzes the reversible phosphorylation of UMP to UDP. The protein is Uridylate kinase of Vibrio cholerae serotype O1 (strain ATCC 39541 / Classical Ogawa 395 / O395).